We begin with the raw amino-acid sequence, 169 residues long: MSDDRLGLGRERRFLVLLGIICLALIGGALYMQVVLGEAPCPLCILQRYALLLIALFAFIGAAMSSRRGVTVMETLVVICALAGAGVAGHHVYTQFYPSVSCGIDVLQPIVDSLPLAKIFPLGFQVDGFCSTPYPPILGLSLAQWALVAFVLTVILVPLGVVRNRKKTY.

Residues 1–14 (MSDDRLGLGRERRF) are Cytoplasmic-facing. Residues 15-31 (LVLLGIICLALIGGALY) form a helical membrane-spanning segment. The Periplasmic segment spans residues 32 to 49 (MQVVLGEAPCPLCILQRY). Cysteines 41 and 44 form a disulfide. Residues 50-64 (ALLLIALFAFIGAAM) traverse the membrane as a helical segment. The Cytoplasmic portion of the chain corresponds to 65-71 (SSRRGVT). The chain crosses the membrane as a helical span at residues 72–89 (VMETLVVICALAGAGVAG). Residues 90–144 (HHVYTQFYPSVSCGIDVLQPIVDSLPLAKIFPLGFQVDGFCSTPYPPILGLSLAQ) are Periplasmic-facing. The cysteines at positions 102 and 130 are disulfide-linked. A helical transmembrane segment spans residues 145–163 (WALVAFVLTVILVPLGVVR). At 164–169 (NRKKTY) the chain is on the cytoplasmic side.

This sequence belongs to the DsbB family.

The protein resides in the cell inner membrane. Required for disulfide bond formation in some periplasmic proteins. Acts by oxidizing the DsbA protein. The protein is Disulfide bond formation protein B 1 of Pseudomonas fluorescens (strain ATCC BAA-477 / NRRL B-23932 / Pf-5).